Reading from the N-terminus, the 147-residue chain is D-aminoacyl-tRNA deacylase (147 aa).

Residues 136–137 (GP) carry the Gly-cisPro motif, important for rejection of L-amino acids motif.

The protein belongs to the DTD family. In terms of assembly, homodimer.

It localises to the cytoplasm. The enzyme catalyses glycyl-tRNA(Ala) + H2O = tRNA(Ala) + glycine + H(+). It carries out the reaction a D-aminoacyl-tRNA + H2O = a tRNA + a D-alpha-amino acid + H(+). Its function is as follows. An aminoacyl-tRNA editing enzyme that deacylates mischarged D-aminoacyl-tRNAs. Also deacylates mischarged glycyl-tRNA(Ala), protecting cells against glycine mischarging by AlaRS. Acts via tRNA-based rather than protein-based catalysis; rejects L-amino acids rather than detecting D-amino acids in the active site. By recycling D-aminoacyl-tRNA to D-amino acids and free tRNA molecules, this enzyme counteracts the toxicity associated with the formation of D-aminoacyl-tRNA entities in vivo and helps enforce protein L-homochirality. This Streptococcus equi subsp. zooepidemicus (strain H70) protein is D-aminoacyl-tRNA deacylase.